The following is a 283-amino-acid chain: ATP phosphoribosyltransferase (283 aa).

Belongs to the ATP phosphoribosyltransferase family. Long subfamily. Requires Mg(2+) as cofactor.

It localises to the cytoplasm. The catalysed reaction is 1-(5-phospho-beta-D-ribosyl)-ATP + diphosphate = 5-phospho-alpha-D-ribose 1-diphosphate + ATP. It functions in the pathway amino-acid biosynthesis; L-histidine biosynthesis; L-histidine from 5-phospho-alpha-D-ribose 1-diphosphate: step 1/9. Feedback inhibited by histidine. Its function is as follows. Catalyzes the condensation of ATP and 5-phosphoribose 1-diphosphate to form N'-(5'-phosphoribosyl)-ATP (PR-ATP). Has a crucial role in the pathway because the rate of histidine biosynthesis seems to be controlled primarily by regulation of HisG enzymatic activity. The chain is ATP phosphoribosyltransferase from Bifidobacterium longum (strain NCC 2705).